A 485-amino-acid polypeptide reads, in one-letter code: Glutamate--tRNA ligase 1 (485 aa).

Residues P10–N20 carry the 'HIGH' region motif. Positions K252 to R256 match the 'KMSKS' region motif. An ATP-binding site is contributed by K255.

Belongs to the class-I aminoacyl-tRNA synthetase family. Glutamate--tRNA ligase type 1 subfamily. As to quaternary structure, monomer.

Its subcellular location is the cytoplasm. The catalysed reaction is tRNA(Glu) + L-glutamate + ATP = L-glutamyl-tRNA(Glu) + AMP + diphosphate. Its function is as follows. Catalyzes the attachment of glutamate to tRNA(Glu) in a two-step reaction: glutamate is first activated by ATP to form Glu-AMP and then transferred to the acceptor end of tRNA(Glu). The polypeptide is Glutamate--tRNA ligase 1 (Thermoanaerobacter sp. (strain X514)).